Here is a 579-residue protein sequence, read N- to C-terminus: Nuclear hormone receptor family member nhr-47 (579 aa).

The segment at residues 8–83 (GTLCAVCDDI…VGMDKNSIQN (76 aa)) is a DNA-binding region (nuclear receptor). 2 consecutive NR C4-type zinc fingers follow at residues 11–31 (CAVCDDIATGKHYSVASCNGC) and 47–71 (CQGNKDCPVNKGVRCACRYCRLQKC). Residues 87 to 128 (RIGYTKRKRRHDDNDMEGGVHHSEHIRDGSSGSPQMNDESPE) form a disordered region. The span at 104–114 (GGVHHSEHIRD) shows a compositional bias: basic and acidic residues. Residues 164–553 (ADLHSYATLE…SLVKETSLGP (390 aa)) enclose the NR LBD domain.

This sequence belongs to the nuclear hormone receptor family.

The protein resides in the nucleus. Its function is as follows. Orphan nuclear receptor. The sequence is that of Nuclear hormone receptor family member nhr-47 (nhr-47) from Caenorhabditis elegans.